Here is a 338-residue protein sequence, read N- to C-terminus: MATQHPIGKKTACVVGGTGFVASLLVKLLLQKGYAVNTTVRDPDNQKKVSHLLELQELGDLKIFRADLTDELSFEAPIAGCDFVFHVATPVHFASEDPENDMIKPAIQGVVNVMKACTRAKSVKRVILTSSAAAVTINQLDGTGLVVDEKNWTDIEFLTSAKPPTWGYPASKTLAEKAAWKFAEENNIDLITVIPTLMAGSSLTSDVPSSIGLAMSLITGNEFLINGMKGMQMLSGSVSIAHVEDVCRAHIFVAEKESASGRYICCAANTSVPELAKFLSKRYPQYKVPTDFGDFPPKSKLIISSEKLVKEGFSFKYGIEEIYDESVEYFKAKGLLQN.

NADP(+) contacts are provided by residues 18 to 21 (TGFV), K48, 87 to 90 (VATP), and Y168.

It belongs to the NAD(P)-dependent epimerase/dehydratase family. Dihydroflavonol-4-reductase subfamily. As to expression, expressed in seeds, grape skins, flowers and leaves.

The catalysed reaction is a (2S,3R)-flavan-3-ol + 2 NADP(+) = an anthocyanidin with a 3-hydroxy group + 2 NADPH + 2 H(+). It carries out the reaction a (2S,3S)-flavan-3-ol + 2 NADP(+) = an anthocyanidin with a 3-hydroxy group + 2 NADPH + 2 H(+). The protein operates within secondary metabolite biosynthesis; flavonoid biosynthesis. Its activity is regulated as follows. Inhibited at NaCl concentrations higher than 200 mM. Its function is as follows. Produces the terminal flavan-3-ol monomers required for the formation of proanthocyanidins or condensed tannins in leaves and flowers, as well as in the skin and seeds of developing berries. Behaves as a reductase and as a C-3 epimerase. Catalyzes the double reduction of anthocyanidins, producing a mixture of (2S,3S)- and (2S,3R)-flavan-3-ols. The enzyme catalyzes sequential hydride transfers to C-2 and C-4, respectively and epimerization at C-3 is achieved by tautomerization that occurs between the two hydride transfers. Converts cyanidin, pelargonidin and delphinidin into catechin and epicatechin, afzelechin and epiafzelechin, and gallocatechin and epigallocatechin respectively. The protein is Anthocyanidin reductase ((2S)-flavan-3-ol-forming) of Vitis vinifera (Grape).